The sequence spans 84 residues: Kidney-associated antigen 1 (84 aa).

Positions 31–84 (PGAAAAHLPRWPPPQLAASRREAPPLSQRPHRTQGAGSPPETNEKLTNPQVKEK) are disordered. The span at 75 to 84 (KLTNPQVKEK) shows a compositional bias: polar residues.

In terms of tissue distribution, expressed in testis and kidney, and, at lower levels, in urinary bladder and liver. Expressed by a high proportion of tumors of various histologic origin, including melanomas, sarcomas and colorectal carcinomas.

The protein is Kidney-associated antigen 1 (KAAG1) of Homo sapiens (Human).